We begin with the raw amino-acid sequence, 241 residues long: Triosephosphate isomerase (241 aa).

9 to 11 lines the substrate pocket; sequence NWK. Residue histidine 96 is the Electrophile of the active site. The active-site Proton acceptor is the glutamate 165. Residues glycine 171, serine 204, and 225 to 226 each bind substrate; that span reads GG.

The protein belongs to the triosephosphate isomerase family. In terms of assembly, homodimer.

Its subcellular location is the cytoplasm. It carries out the reaction D-glyceraldehyde 3-phosphate = dihydroxyacetone phosphate. Its pathway is carbohydrate biosynthesis; gluconeogenesis. The protein operates within carbohydrate degradation; glycolysis; D-glyceraldehyde 3-phosphate from glycerone phosphate: step 1/1. Functionally, involved in the gluconeogenesis. Catalyzes stereospecifically the conversion of dihydroxyacetone phosphate (DHAP) to D-glyceraldehyde-3-phosphate (G3P). This Gloeothece citriformis (strain PCC 7424) (Cyanothece sp. (strain PCC 7424)) protein is Triosephosphate isomerase.